The chain runs to 274 residues: ATP synthase subunit delta (274 aa).

This sequence belongs to the ATPase delta chain family. As to quaternary structure, F-type ATPases have 2 components, F(1) - the catalytic core - and F(0) - the membrane proton channel. F(1) has five subunits: alpha(3), beta(3), gamma(1), delta(1), epsilon(1). F(0) has three main subunits: a(1), b(2) and c(10-14). The alpha and beta chains form an alternating ring which encloses part of the gamma chain. F(1) is attached to F(0) by a central stalk formed by the gamma and epsilon chains, while a peripheral stalk is formed by the delta and b chains.

The protein localises to the cell membrane. In terms of biological role, f(1)F(0) ATP synthase produces ATP from ADP in the presence of a proton or sodium gradient. F-type ATPases consist of two structural domains, F(1) containing the extramembraneous catalytic core and F(0) containing the membrane proton channel, linked together by a central stalk and a peripheral stalk. During catalysis, ATP synthesis in the catalytic domain of F(1) is coupled via a rotary mechanism of the central stalk subunits to proton translocation. Functionally, this protein is part of the stalk that links CF(0) to CF(1). It either transmits conformational changes from CF(0) to CF(1) or is implicated in proton conduction. The protein is ATP synthase subunit delta of Corynebacterium efficiens (strain DSM 44549 / YS-314 / AJ 12310 / JCM 11189 / NBRC 100395).